Here is a 98-residue protein sequence, read N- to C-terminus: C-C motif chemokine 19 (98 aa).

The signal sequence occupies residues 1 to 21 (MALLLALSLLVLWTSPAPTLS). Disulfide bonds link C29-C55 and C30-C71.

It belongs to the intercrine beta (chemokine CC) family. Interacts with TNFAIP6 (via Link domain). As to expression, expressed at high levels in the lymph nodes, thymus and appendix. Intermediate levels seen in colon and trachea, while low levels found in spleen, small intestine, lung, kidney and stomach.

It is found in the secreted. Its function is as follows. May play a role not only in inflammatory and immunological responses but also in normal lymphocyte recirculation and homing. May play an important role in trafficking of T-cells in thymus, and T-cell and B-cell migration to secondary lymphoid organs. Binds to chemokine receptor CCR7. Recombinant CCL19 shows potent chemotactic activity for T-cells and B-cells but not for granulocytes and monocytes. Binds to atypical chemokine receptor ACKR4 and mediates the recruitment of beta-arrestin (ARRB1/2) to ACKR4. The sequence is that of C-C motif chemokine 19 (CCL19) from Homo sapiens (Human).